A 399-amino-acid polypeptide reads, in one-letter code: PCI domain-containing protein 2 (399 aa).

Residues 210 to 391 (VTYKYYVGRK…QKLVVSKQNP (182 aa)) enclose the PCI domain.

It belongs to the CSN12 family.

The chain is PCI domain-containing protein 2 (pcid2) from Danio rerio (Zebrafish).